Reading from the N-terminus, the 393-residue chain is Dual-specificity RNA methyltransferase RlmN (393 aa).

Catalysis depends on Glu-114, which acts as the Proton acceptor. The Radical SAM core domain maps to 120 to 359 (EDDRATLCVS…VIVRKTRGDD (240 aa)). An intrachain disulfide couples Cys-127 to Cys-364. [4Fe-4S] cluster-binding residues include Cys-134, Cys-138, and Cys-141. S-adenosyl-L-methionine is bound by residues 188-189 (GE), Ser-220, 242-244 (SLH), and Asn-321. Residue Cys-364 is the S-methylcysteine intermediate of the active site.

It belongs to the radical SAM superfamily. RlmN family. The cofactor is [4Fe-4S] cluster.

It is found in the cytoplasm. The enzyme catalyses adenosine(2503) in 23S rRNA + 2 reduced [2Fe-2S]-[ferredoxin] + 2 S-adenosyl-L-methionine = 2-methyladenosine(2503) in 23S rRNA + 5'-deoxyadenosine + L-methionine + 2 oxidized [2Fe-2S]-[ferredoxin] + S-adenosyl-L-homocysteine. It carries out the reaction adenosine(37) in tRNA + 2 reduced [2Fe-2S]-[ferredoxin] + 2 S-adenosyl-L-methionine = 2-methyladenosine(37) in tRNA + 5'-deoxyadenosine + L-methionine + 2 oxidized [2Fe-2S]-[ferredoxin] + S-adenosyl-L-homocysteine. Its function is as follows. Specifically methylates position 2 of adenine 2503 in 23S rRNA and position 2 of adenine 37 in tRNAs. m2A2503 modification seems to play a crucial role in the proofreading step occurring at the peptidyl transferase center and thus would serve to optimize ribosomal fidelity. The polypeptide is Dual-specificity RNA methyltransferase RlmN (Actinobacillus pleuropneumoniae serotype 5b (strain L20)).